The primary structure comprises 329 residues: Beta-tectorin (329 aa).

Positions 1–17 are cleaved as a signal peptide; it reads MVVRAFVLLALFAEASA. The ZP domain occupies 19-283; it reads SCTPNKADVI…LSCPVNCDKR (265 aa). N-linked (GlcNAc...) asparagine glycans are attached at residues N80, N104, N116, and N145. An intrachain disulfide couples C204 to C264. A lipid anchor (GPI-anchor amidated alanine) is attached at A305. A propeptide spans 306–329 (removed in mature form); that stretch reads FSGLCDFSDVLLHLILMLGTWAVL.

May form homomeric filament after self-association or heteromeric filament after association with alpha-tectorin. Interacts with CEACAM16. The presence of a hydrophobic C-terminus preceded by a potential cleavage site strongly suggests that tectorins are synthesized as glycosylphosphatidylinositol-linked, membrane-bound precursors. Tectorins are targeted to the apical surface of the inner ear epithelia by the lipid and proteolytically released into the extracellular compartment.

The protein localises to the cell membrane. It localises to the secreted. The protein resides in the extracellular space. It is found in the extracellular matrix. In terms of biological role, one of the major non-collagenous components of the tectorial membrane. The tectorial membrane is an extracellular matrix of the inner ear that covers the neuroepithelium of the cochlea and contacts the stereocilia bundles of specialized sensory hair cells. Sound induces movement of these hair cells relative to the tectorial membrane, deflects the stereocilia and leads to fluctuations in hair-cell membrane potential, transducing sound into electrical signals. This is Beta-tectorin (Tectb) from Mus musculus (Mouse).